Consider the following 427-residue polypeptide: Probable protein phosphatase 2C 64 (427 aa).

The tract at residues methionine 1 to glutamine 36 is disordered. A PPM-type phosphatase domain is found at threonine 53 to leucine 331. The Mn(2+) site is built by aspartate 89, glycine 90, aspartate 276, and aspartate 322.

This sequence belongs to the PP2C family. Mg(2+) serves as cofactor. Requires Mn(2+) as cofactor.

It carries out the reaction O-phospho-L-seryl-[protein] + H2O = L-seryl-[protein] + phosphate. The enzyme catalyses O-phospho-L-threonyl-[protein] + H2O = L-threonyl-[protein] + phosphate. The protein is Probable protein phosphatase 2C 64 of Oryza sativa subsp. japonica (Rice).